A 490-amino-acid polypeptide reads, in one-letter code: Ribulose bisphosphate carboxylase large chain (490 aa).

Substrate is bound by residues Asn127 and Thr177. Lys179 serves as the catalytic Proton acceptor. Position 181 (Lys181) interacts with substrate. Lys205, Asp207, and Glu208 together coordinate Mg(2+). Lys205 is subject to N6-carboxylysine. The Proton acceptor role is filled by His297. 3 residues coordinate substrate: Arg298, His330, and Ser382.

Belongs to the RuBisCO large chain family. Type I subfamily. As to quaternary structure, heterohexadecamer of 8 large chains and 8 small chains. Mg(2+) serves as cofactor.

Its subcellular location is the plastid. The protein localises to the chloroplast. The catalysed reaction is 2 (2R)-3-phosphoglycerate + 2 H(+) = D-ribulose 1,5-bisphosphate + CO2 + H2O. It catalyses the reaction D-ribulose 1,5-bisphosphate + O2 = 2-phosphoglycolate + (2R)-3-phosphoglycerate + 2 H(+). RuBisCO catalyzes two reactions: the carboxylation of D-ribulose 1,5-bisphosphate, the primary event in carbon dioxide fixation, as well as the oxidative fragmentation of the pentose substrate in the photorespiration process. Both reactions occur simultaneously and in competition at the same active site. The sequence is that of Ribulose bisphosphate carboxylase large chain from Thalassiosira nordenskioeldii (Marine diatom).